Consider the following 374-residue polypeptide: Isopentenyl-diphosphate delta-isomerase (374 aa).

Position 13-14 (13-14) interacts with substrate; it reads RK. FMN is bound by residues 71–73, Ser104, and Asn132; that span reads GMT. Position 104-106 (104-106) interacts with substrate; it reads SQR. Gln171 contributes to the substrate binding site. Glu172 contributes to the Mg(2+) binding site. FMN-binding positions include Lys203, Thr233, 282-284, and 303-304; these read GMR and AL.

This sequence belongs to the IPP isomerase type 2 family. Homooctamer. Dimer of tetramers. The cofactor is FMN. Requires NADPH as cofactor. Mg(2+) serves as cofactor.

It is found in the cytoplasm. It catalyses the reaction isopentenyl diphosphate = dimethylallyl diphosphate. Functionally, involved in the biosynthesis of isoprenoids. Catalyzes the 1,3-allylic rearrangement of the homoallylic substrate isopentenyl (IPP) to its allylic isomer, dimethylallyl diphosphate (DMAPP). This is Isopentenyl-diphosphate delta-isomerase from Thermococcus onnurineus (strain NA1).